Consider the following 85-residue polypeptide: Small ribosomal subunit protein uS17 (85 aa).

The protein belongs to the universal ribosomal protein uS17 family. As to quaternary structure, part of the 30S ribosomal subunit.

One of the primary rRNA binding proteins, it binds specifically to the 5'-end of 16S ribosomal RNA. The protein is Small ribosomal subunit protein uS17 of Rhodospirillum centenum (strain ATCC 51521 / SW).